The following is a 2450-amino-acid chain: Tetratricopeptide repeat protein 28 (2450 aa).

Residue Met-1 is modified to N-acetylmethionine. The disordered stretch occupies residues 1–36 (MEQPPPLAPEPASARSRRRREPESPPAPIPLFGART). The residue at position 24 (Ser-24) is a Phosphoserine. TPR repeat units lie at residues 52–85 (FVEK…DPQN), 87–119 (ILYS…NPKW), 120–153 (PKAY…DPKS), 190–223 (FVVV…GTCS), 228–261 (GSVF…AKTL), 268–301 (CRAH…AMKL), 308–341 (SSAL…AKQS), 348–381 (AREL…AKDL), 388–421 (ARAY…AQEL), 428–461 (MRAY…AEDL), 468–501 (GRAS…AQEL), 508–541 (GRAY…SMEV), 548–581 (ASTH…AREL), 588–621 (ARAL…APDL), 628–661 (GKVC…AKDL), 668–701 (AKAY…AQSL), 708–741 (FRAL…SHHV), 748–781 (ASAY…YQEL), 788–821 (CRAH…GRKL), 828–861 (AQVY…LQQL), 871–904 (GRAY…AQSL), 911–944 (AKAY…AHEL), 951–984 (AQAY…ARDM), 991–1024 (SDAA…AEET), 1031–1064 (GRAY…AAQM), 1071–1104 (TVSY…AEQL), 1111–1144 (AKIR…FETI), and 1163–1196 (TSSY…AFAD). The segment at 1362–1381 (SGTVSPSKDGTSSLPRRQNS) is disordered. Residues Ser-1584 and Ser-2098 each carry the phosphoserine modification. A disordered region spans residues 2001–2364 (KPEGGLEGGG…GTLTSKRDVL (364 aa)). Over residues 2090 to 2116 (SVSSKGSVSTPNSPVKMTLIPSPNSPF) the composition is skewed to polar residues. Over residues 2124–2140 (SSDTGESDQSSTETDST) the composition is skewed to low complexity. Positions 2143–2153 (SQEESTPKLDP) are enriched in basic and acidic residues. Residues 2191 to 2206 (APSSTTVFRASETSAF) are compositionally biased toward polar residues. Ser-2216 carries the phosphoserine modification. A compositionally biased stretch (polar residues) spans 2229 to 2245 (ARSSSLPKVSSPATSEV). Composition is skewed to low complexity over residues 2252–2262 (SPPGSSHPSPG) and 2296–2320 (SPAC…SPAD). A phosphoserine mark is found at Ser-2365 and Ser-2370.

As to quaternary structure, interacts with AURKB. In terms of tissue distribution, expressed in embryos at all stages examined. In adult tissues, detected in heart and at low levels in kidney and testis.

Its subcellular location is the cytoplasm. It is found in the cytoskeleton. The protein resides in the microtubule organizing center. The protein localises to the centrosome. It localises to the spindle. Its subcellular location is the spindle pole. It is found in the midbody. Its function is as follows. During mitosis, may be involved in the condensation of spindle midzone microtubules, leading to the formation of midbody. Functionally, essential for the formation and integrity of the midbody. Max play a critical role in the progress of mitosis and cytokinesis during cell cycle. In Mus musculus (Mouse), this protein is Tetratricopeptide repeat protein 28 (Ttc28).